Consider the following 542-residue polypeptide: Katanin p60 ATPase-containing subunit A-like 2 (542 aa).

Residues 25 to 57 (RRKNLLILIMHYLLQEGYMDSANSLEQETKISL) enclose the LisH domain. 2 disordered regions span residues 94–126 (LDHD…RIAQ) and 142–168 (HAHQ…ASEI). Residues 114–126 (GSNSTQGLPRIAQ) show a composition bias toward polar residues. An ATP-binding site is contributed by 298-305 (GPPGTGKT).

It belongs to the AAA ATPase family. Katanin p60 subunit A1 subfamily. A-like 2 sub-subfamily.

Its subcellular location is the cytoplasm. It is found in the cytoskeleton. It localises to the spindle. The protein localises to the spindle pole. The catalysed reaction is n ATP + n H2O + a microtubule = n ADP + n phosphate + (n+1) alpha/beta tubulin heterodimers.. Severs microtubules in vitro in an ATP-dependent manner. This activity may promote rapid reorganization of cellular microtubule arrays. The protein is Katanin p60 ATPase-containing subunit A-like 2 (katnal2) of Xenopus tropicalis (Western clawed frog).